The following is a 356-amino-acid chain: UDP-N-acetylglucosamine--N-acetylmuramyl-(pentapeptide) pyrophosphoryl-undecaprenol N-acetylglucosamine transferase (356 aa).

Residues R166, S196, and Q290 each coordinate UDP-N-acetyl-alpha-D-glucosamine.

This sequence belongs to the glycosyltransferase 28 family. MurG subfamily.

The protein localises to the cell membrane. It carries out the reaction Mur2Ac(oyl-L-Ala-gamma-D-Glu-L-Lys-D-Ala-D-Ala)-di-trans,octa-cis-undecaprenyl diphosphate + UDP-N-acetyl-alpha-D-glucosamine = beta-D-GlcNAc-(1-&gt;4)-Mur2Ac(oyl-L-Ala-gamma-D-Glu-L-Lys-D-Ala-D-Ala)-di-trans,octa-cis-undecaprenyl diphosphate + UDP + H(+). It participates in cell wall biogenesis; peptidoglycan biosynthesis. Cell wall formation. Catalyzes the transfer of a GlcNAc subunit on undecaprenyl-pyrophosphoryl-MurNAc-pentapeptide (lipid intermediate I) to form undecaprenyl-pyrophosphoryl-MurNAc-(pentapeptide)GlcNAc (lipid intermediate II). This chain is UDP-N-acetylglucosamine--N-acetylmuramyl-(pentapeptide) pyrophosphoryl-undecaprenol N-acetylglucosamine transferase, found in Staphylococcus aureus (strain USA300).